We begin with the raw amino-acid sequence, 791 residues long: Cellobionic acid phosphorylase (791 aa).

The active-site Proton donor is the Asp478.

This sequence belongs to the glycosyl hydrolase 94 family. Cellobionic acid phosphorylase subfamily. In terms of assembly, homodimer.

The enzyme catalyses 4-O-beta-D-glucopyranosyl-D-gluconate + phosphate = D-gluconate + alpha-D-glucose 1-phosphate. Its pathway is glycan metabolism; cellulose degradation. Catalyzes the reversible phosphorolysis of cellobionic acid (4-O-beta-D-glucopyranosyl-D-gluconate), a probable step in cellulose degradation. May be part of a metabolic pathway where cellobionic acid is converted into alpha-D-glucose 1-phosphate and D-gluconic acid to enter glycolysis and the pentose phosphate pathway, respectively. Produces 4-O-beta-D-glucopyranosyl-D-glucuronate from alpha-D-glucose 1-phosphate and D-glucuronate with low activity in the synthetic direction. In Neurospora crassa (strain ATCC 24698 / 74-OR23-1A / CBS 708.71 / DSM 1257 / FGSC 987), this protein is Cellobionic acid phosphorylase.